We begin with the raw amino-acid sequence, 371 residues long: tRNA-specific 2-thiouridylase MnmA (371 aa).

Residues 7-14 and L33 contribute to the ATP site; that span reads AMSGGVDS. C101 functions as the Nucleophile in the catalytic mechanism. A disulfide bridge links C101 with C213. Residue G125 participates in ATP binding. The interval 163-165 is interaction with tRNA; it reads KDQ. The Cysteine persulfide intermediate role is filled by C213.

It belongs to the MnmA/TRMU family.

The protein localises to the cytoplasm. The catalysed reaction is S-sulfanyl-L-cysteinyl-[protein] + uridine(34) in tRNA + AH2 + ATP = 2-thiouridine(34) in tRNA + L-cysteinyl-[protein] + A + AMP + diphosphate + H(+). Functionally, catalyzes the 2-thiolation of uridine at the wobble position (U34) of tRNA, leading to the formation of s(2)U34. This is tRNA-specific 2-thiouridylase MnmA from Roseiflexus castenholzii (strain DSM 13941 / HLO8).